The chain runs to 471 residues: Putative ETHYLENE INSENSITIVE 3-like 4 protein (471 aa).

Positions 280-316 are disordered; it reads DLKISEDQDDQESSGSKRKSESMEPSKSVYTCQNSSC. Over residues 304 to 316 the composition is skewed to polar residues; sequence PSKSVYTCQNSSC.

Belongs to the EIN3 family.

It localises to the nucleus. Its function is as follows. Putative transcription factor that may be involved in the ethylene response pathway. This chain is Putative ETHYLENE INSENSITIVE 3-like 4 protein (EIL4), found in Arabidopsis thaliana (Mouse-ear cress).